The primary structure comprises 113 residues: Small ribosomal subunit protein uS17 (113 aa).

Belongs to the universal ribosomal protein uS17 family. Part of the 30S ribosomal subunit.

One of the primary rRNA binding proteins, it binds specifically to the 5'-end of 16S ribosomal RNA. This chain is Small ribosomal subunit protein uS17, found in Nanoarchaeum equitans (strain Kin4-M).